The following is a 473-amino-acid chain: 3-isopropylmalate dehydratase large subunit (473 aa).

Positions 348, 408, and 411 each coordinate [4Fe-4S] cluster. Positions 421–440 are disordered; sequence GDEASASSSNRNFIGRQGSK.

It belongs to the aconitase/IPM isomerase family. LeuC type 1 subfamily. Heterodimer of LeuC and LeuD. The cofactor is [4Fe-4S] cluster.

The catalysed reaction is (2R,3S)-3-isopropylmalate = (2S)-2-isopropylmalate. It functions in the pathway amino-acid biosynthesis; L-leucine biosynthesis; L-leucine from 3-methyl-2-oxobutanoate: step 2/4. Functionally, catalyzes the isomerization between 2-isopropylmalate and 3-isopropylmalate, via the formation of 2-isopropylmaleate. In Haloferax volcanii (strain ATCC 29605 / DSM 3757 / JCM 8879 / NBRC 14742 / NCIMB 2012 / VKM B-1768 / DS2) (Halobacterium volcanii), this protein is 3-isopropylmalate dehydratase large subunit.